The chain runs to 89 residues: UPF0335 protein CCNA_03428 (89 aa).

It belongs to the UPF0335 family.

In Caulobacter vibrioides (strain NA1000 / CB15N) (Caulobacter crescentus), this protein is UPF0335 protein CCNA_03428.